Here is a 282-residue protein sequence, read N- to C-terminus: MNSSTSTMSEEPDALSVVNQLRDLAADPLNRRAIVQDQGCLPGLILSMDHPNPPVVHSALLALRYLAECRANREKMKGELGMMLSLQNVIQKTTTPGETKLLASEIYDILQSSNMADGDSFNEMNSRRRKAQFFLGTTNKRAKTVVLHIDGLDDTSRRNLCEEALLKIKGVISFTFQMAVQRCVVRIRSDLKAEALASAIASTKVMKAQQVVKSESGEEMLVPFQDTPVEVEQNTELPDYLPEDESPTKEQDKAVSRVGSHPEGGASWLSTAANFLSRSFYW.

Residue Met1 is modified to N-acetylmethionine. Residues 39-81 (GCLPGLILSMDHPNPPVVHSALLALRYLAECRANREKMKGELG) form an ARM repeat. Thr137 bears the Phosphothreonine mark. Residues Ser189, Ser246, Ser260, and Ser267 each carry the phosphoserine modification. Positions 239 to 261 (DYLPEDESPTKEQDKAVSRVGSH) are disordered. The span at 246 to 255 (SPTKEQDKAV) shows a compositional bias: basic and acidic residues.

Interacts with mitochondrial contact site and cristae organizing system (MICOS) complex components IMMT/MIC60 and MICOS10/MIC10. Interacts with mitochondrial outer membrane sorting assembly machinery (SAM) complex components SAMM50 and MTX1.

It localises to the cytoplasm. The protein localises to the mitochondrion. It is found in the mitochondrion outer membrane. Its function is as follows. In association with mitochondrial contact site and cristae organizing system (MICOS) complex components and mitochondrial outer membrane sorting assembly machinery (SAM) complex components may regulate mitochondrial dynamics playing a role in determining mitochondrial length, distribution and motility. This Pongo abelii (Sumatran orangutan) protein is Armadillo repeat-containing protein 1 (ARMC1).